A 284-amino-acid polypeptide reads, in one-letter code: ATP phosphoribosyltransferase (284 aa).

The protein belongs to the ATP phosphoribosyltransferase family. Long subfamily. In terms of assembly, equilibrium between an active dimeric form, an inactive hexameric form and higher aggregates. Interconversion between the various forms is largely reversible and is influenced by the natural substrates and inhibitors of the enzyme. Mg(2+) serves as cofactor.

The protein localises to the cytoplasm. It carries out the reaction 1-(5-phospho-beta-D-ribosyl)-ATP + diphosphate = 5-phospho-alpha-D-ribose 1-diphosphate + ATP. It participates in amino-acid biosynthesis; L-histidine biosynthesis; L-histidine from 5-phospho-alpha-D-ribose 1-diphosphate: step 1/9. Feedback inhibited by histidine. Catalyzes the condensation of ATP and 5-phosphoribose 1-diphosphate to form N'-(5'-phosphoribosyl)-ATP (PR-ATP). Has a crucial role in the pathway because the rate of histidine biosynthesis seems to be controlled primarily by regulation of HisG enzymatic activity. In Mycobacterium bovis (strain ATCC BAA-935 / AF2122/97), this protein is ATP phosphoribosyltransferase (hisG).